The chain runs to 180 residues: Oligoribonuclease (180 aa).

The Exonuclease domain occupies 7–170; the sequence is LIWIDLEMTG…SDIQDSIDEL (164 aa). Residue Tyr-128 is part of the active site.

Belongs to the oligoribonuclease family.

It localises to the cytoplasm. In terms of biological role, 3'-to-5' exoribonuclease specific for small oligoribonucleotides. This chain is Oligoribonuclease, found in Ruthia magnifica subsp. Calyptogena magnifica.